Here is a 170-residue protein sequence, read N- to C-terminus: Cathelicidin antimicrobial peptide (170 aa).

The N-terminal stretch at 1–30 is a signal peptide; that stretch reads MKTQRDSPSLGRWSLVLLLLGLVMPLAIVA. Residues 31–131 constitute a propeptide, cathelin-like domain (CLD); sequence QVLSYQEAVL…DISCDKDNRR (101 aa). 2 disulfide bridges follow: Cys86-Cys97 and Cys108-Cys125. Residues 150–162 are active core; that stretch reads FKRIVQRIKDFLQ.

It belongs to the cathelicidin family. Monomer, homodimer or homotrimer (in vitro). Oligomerizes as tetra- or hexamer in solution (in vitro). Post-translationally, proteolytically cleaved by proteinase PRTN3 into antibacterial peptide LL-37. Proteolytically cleaved by cathepsin CTSG and neutrophil elastase ELANE. In terms of processing, resistant to proteolytic degradation in solution, and when bound to both zwitterionic (mimicking mammalian membranes) and negatively charged membranes (mimicking bacterial membranes). After secretion onto the skin surface, the CAMP gene product is processed by a serine protease-dependent mechanism into multiple novel antimicrobial peptides distinct from and shorter than cathelicidin LL-37. These peptides show enhanced antimicrobial action, acquiring the ability to kill skin pathogens such as S.aureus, E.coli and C.albicans. These peptides have lost the ability to stimulate CXCL8/IL8 release from keratinocytes. The peptides act synergistically, killing bacteria at lower concentrations when present together, and maintain activity at increased salt condition.

Its subcellular location is the secreted. It localises to the vesicle. Its function is as follows. Antimicrobial protein that is an integral component of the innate immune system. Binds to bacterial lipopolysaccharides (LPS). Acts via neutrophil N-formyl peptide receptors to enhance the release of CXCL2. Postsecretory processing generates multiple cathelicidin antimicrobial peptides with various lengths which act as a topical antimicrobial defense in sweat on skin. The unprocessed precursor form, cathelicidin antimicrobial peptide, inhibits the growth of Gram-negative E.coli and E.aerogenes with efficiencies comparable to that of the mature peptide LL-37 (in vitro). In terms of biological role, antimicrobial peptide that is an integral component of the innate immune system. Binds to bacterial lipopolysaccharides (LPS). Causes membrane permeabilization by forming transmembrane pores (in vitro). Causes lysis of E.coli. Exhibits antimicrobial activity against Gram-negative bacteria such as P.aeruginosa, S.typhimurium, E.aerogenes, E.coli and P.syringae, Gram-positive bacteria such as L.monocytogenes, S.epidermidis, S.pyogenes and S.aureus, as well as vancomycin-resistant enterococci (in vitro). Exhibits antimicrobial activity against methicillin-resistant S.aureus, P.mirabilis, and C.albicans in low-salt media, but not in media containing 100 mM NaCl (in vitro). Forms chiral supramolecular assemblies with quinolone signal (PQS) molecules of P.aeruginosa, which may lead to interference of bacterial quorum signaling and perturbance of bacterial biofilm formation. May form supramolecular fiber-like assemblies on bacterial membranes. Induces cytokine and chemokine producation as well as TNF/TNFA and CSF2/GMCSF production in normal human keratinocytes. Exhibits hemolytic activity against red blood cells. Functionally, exhibits antimicrobial activity against E.coli and B.megaterium (in vitro). This Nomascus gabriellae (Red-cheeked gibbon) protein is Cathelicidin antimicrobial peptide.